We begin with the raw amino-acid sequence, 276 residues long: Tumor necrosis factor-inducible gene 6 protein (276 aa).

The signal sequence occupies residues 1–17 (MIILIYLFVLVWEEAQG). The region spanning 36 to 129 (GVYHREARSG…SERWDAYCYN (94 aa)) is the Link domain. Intrachain disulfides connect Cys-58–Cys-127, Cys-82–Cys-103, and Cys-135–Cys-161. Asn-118 carries N-linked (GlcNAc...) asparagine glycosylation. Positions 135–247 (CGGVFTDPKR…GGFQIKYVTV (113 aa)) constitute a CUB domain. The Ca(2+) site is built by Glu-183, Asp-191, Asp-232, Ser-234, and Val-235. Cys-188 and Cys-210 are oxidised to a cystine. N-linked (GlcNAc...) asparagine glycosylation is present at Asn-258.

Interacts (via Link domain) with inter-alpha-inhibitor (I-alpha-I) component bikunin. Interacts with ITIH2/HC2; this interaction is required for transesterification of the HC to hyaluronan. Interacts (via Link and CUB domains) with ITIH1. Chondroitin sulfate may be required for the stability of the complex. Interacts (via Link domain) with various C-X-C and C-C chemokines including PF4, CXCL8, CXCL11, CXCL12, CCL2, CCL7, CCL19, CCL21, and CCL27; this interaction interferes with chemokine binding to glycosaminoglycans. Interacts (primarily via Link domain) with BMP2; this interaction is inhibited by hyaluronan. Interacts (via both Link and CUB domains) with TNFSF11. Interacts (via CUB domain) with FN1 (via type III repeats 9-14); this interaction enhances fibronectin fibril assembly. TNFAIP6 may act as a bridging molecule between FN1 and THBS1. Vascular smooth muscle cells.

It localises to the secreted. Major regulator of extracellular matrix organization during tissue remodeling. Catalyzes the transfer of a heavy chain (HC) from inter-alpha-inhibitor (I-alpha-I) complex to hyaluronan. Cleaves the ester bond between the C-terminus of the HC and GalNAc residue of the chondroitin sulfate chain in I-alpha-I complex followed by transesterification of the HC to hyaluronan. In the process, potentiates the antiprotease function of I-alpha-I complex through release of free bikunin. Acts as a catalyst in the formation of hyaluronan-HC oligomers and hyaluronan-rich matrix surrounding the cumulus cell-oocyte complex, a necessary step for oocyte fertilization. Assembles hyaluronan in pericellular matrices that serve as platforms for receptor clustering and signaling. Enables binding of hyaluronan deposited on the surface of macrophages to LYVE1 on lymphatic endothelium and facilitates macrophage extravasation. Alters hyaluronan binding to functionally latent CD44 on vascular endothelium, switching CD44 into an active state that supports leukocyte rolling. Modulates the interaction of chemokines with extracellular matrix components and proteoglycans on endothelial cell surface, likely preventing chemokine gradient formation. In a negative feedback mechanism, may limit excessive neutrophil recruitment at inflammatory sites by antagonizing the association of CXCL8 with glycosaminoglycans on vascular endothelium. Has a role in osteogenesis and bone remodeling. Inhibits BMP2-dependent differentiation of mesenchymal stem cell to osteoblasts. Protects against bone erosion during inflammation by inhibiting TNFSF11/RANKL-dependent osteoclast activation. This Oryctolagus cuniculus (Rabbit) protein is Tumor necrosis factor-inducible gene 6 protein (TNFAIP6).